The following is an 887-amino-acid chain: Probable dual specificity protein kinase madd-3 (887 aa).

Disordered stretches follow at residues 77-147 (PIKS…ISAA), 163-299 (AQPP…PKAL), 313-333 (LPQS…STGG), 347-475 (TTIC…KSAA), and 504-533 (RKPS…QHQD). Residues 108-118 (PTQNPVQLPLP) are compositionally biased toward low complexity. Positions 121 to 130 (VSEKPGDKKS) are enriched in basic and acidic residues. Residues 177 to 192 (SETNSGSGPVSKQVSG) are compositionally biased toward polar residues. The span at 217-241 (SSASTRAKAASAVAPEANPAPVPTA) shows a compositional bias: low complexity. Composition is skewed to polar residues over residues 314–332 (PQSS…TSTG) and 356–366 (NVPSTSQPQQG). Basic and acidic residues predominate over residues 367 to 377 (DNEKRLIEKKL). Over residues 407–419 (LSSNLTTTNNNNN) the composition is skewed to low complexity. The segment covering 439–462 (FSTQAGSGNATTVDDPASTTTSKE) has biased composition (polar residues). The Protein kinase domain occupies 551–863 (FTIYDTLGEG…LPEALQHRYF (313 aa)). Residues 557–565 (LGEGTFGKV) and Lys580 contribute to the ATP site. The active-site Proton acceptor is Asp677.

It belongs to the protein kinase superfamily. CMGC Ser/Thr protein kinase family. Lammer subfamily. In terms of tissue distribution, expressed in body wall, vulval and anal depressor muscles.

The protein localises to the cytoplasm. Its subcellular location is the nucleus. Its function is as follows. Probable dual specificity kinase acting on both serine/threonine and tyrosine-containing substrates. Negatively regulates p38 MAPK signaling to allow for the plasma membrane of body wall muscle cells to form projections, also called muscle arms, that extend and connect the body wall muscles to target motor neurons. Negative regulation of p38 MAPK signaling may in turn modulate the trafficking of the muscle specific receptor eva-1 to the lysosome, to ensure proper display of the eva-1 receptor on the plasma membrane of muscle cells and allow for muscle arm extension towards guidance cues. The polypeptide is Probable dual specificity protein kinase madd-3 (Caenorhabditis elegans).